The primary structure comprises 953 residues: Isoleucine--tRNA ligase (953 aa).

The 'HIGH' region motif lies at 57–67; the sequence is PYANGDIHIGH. Glu582 lines the L-isoleucyl-5'-AMP pocket. Positions 623–627 match the 'KMSKS' region motif; the sequence is KMSKS. Lys626 contacts ATP. Residues Cys916, Cys919, Cys936, and Cys939 each coordinate Zn(2+).

The protein belongs to the class-I aminoacyl-tRNA synthetase family. IleS type 1 subfamily. In terms of assembly, monomer. The cofactor is Zn(2+).

The protein resides in the cytoplasm. The enzyme catalyses tRNA(Ile) + L-isoleucine + ATP = L-isoleucyl-tRNA(Ile) + AMP + diphosphate. Catalyzes the attachment of isoleucine to tRNA(Ile). As IleRS can inadvertently accommodate and process structurally similar amino acids such as valine, to avoid such errors it has two additional distinct tRNA(Ile)-dependent editing activities. One activity is designated as 'pretransfer' editing and involves the hydrolysis of activated Val-AMP. The other activity is designated 'posttransfer' editing and involves deacylation of mischarged Val-tRNA(Ile). The protein is Isoleucine--tRNA ligase of Bordetella bronchiseptica (strain ATCC BAA-588 / NCTC 13252 / RB50) (Alcaligenes bronchisepticus).